We begin with the raw amino-acid sequence, 498 residues long: MPALSHYRSVSSLPSVDRSFLLIQRLRIHGSSSSFPESSPSASILSGADPLKCTVSGGSLAKWITGISAGSALGFLYWSSGSSDSISGLFGGSNLLSFADSSTPSVCGVKVGDLKPRSFIPKLSLPGYSSGFIFGDAYRRKIFFNYEKRLRLQSPPEKVFEYFASVRTDKGEILMKPADLMRAIVPVFPPSESHLVREGYLTGERNPGELRCSPSEFFMLFDVDNDGLISFKEYIFFVTLLSIPESSFAVAFKMFDTDNNGEIDKEEFKTVMSLMRSQHRQGVGHRDGLRTGLHMTGSVEDGGLVEYFFGKDGSQKLKHDKFTKFMKDLTEEMLRLEFAHYDYKRRGSISAKDFALSMVAAADASHLSKLLDRVESLSEHPHLRDMRISLKEFKQFDELRSKLGPFSLALFAYGKANGLLTMKDFKRAASQVCGITLSDNVIEIAFHVFDSNQDGNLSVDEFLRVLHRRERDVAQPIAKGLSRYFSDGWKGSKNCSSS.

A mitochondrion-targeting transit peptide spans 1-29 (MPALSHYRSVSSLPSVDRSFLLIQRLRIH). 4 consecutive EF-hand domains span residues 216–241 (EFFMLFDVDNDGLISFKEYIFFVTLL), 243–278 (IPESSFAVAFKMFDTDNNGEIDKEEFKTVMSLMRSQ), 329–364 (LTEEMLRLEFAHYDYKRRGSISAKDFALSMVAAADA), and 437–472 (LSDNVIEIAFHVFDSNQDGNLSVDEFLRVLHRRERD). Ca(2+) is bound by residues D222, D224, D226, E233, D256, D258, N260, E262, and E267. Positions 450, 452, 454, 456, and 461 each coordinate Ca(2+).

This sequence belongs to the MICU1 family. MICU1 subfamily. As to expression, expressed in both green and non-green tissues, including roots, shoots, floral buds and pollen.

The protein resides in the mitochondrion inner membrane. Its subcellular location is the mitochondrion intermembrane space. Functionally, calcium-binding protein maintaining matrix calcium levels at low concentration. Regulates mitochondrial calcium dynamics in planta by restricting influx. This chain is Calcium uptake protein, mitochondrial, found in Arabidopsis thaliana (Mouse-ear cress).